We begin with the raw amino-acid sequence, 500 residues long: Lysine--tRNA ligase (500 aa).

E410 and E417 together coordinate Mg(2+).

It belongs to the class-II aminoacyl-tRNA synthetase family. In terms of assembly, homodimer. The cofactor is Mg(2+).

It is found in the cytoplasm. The enzyme catalyses tRNA(Lys) + L-lysine + ATP = L-lysyl-tRNA(Lys) + AMP + diphosphate. The protein is Lysine--tRNA ligase of Shewanella loihica (strain ATCC BAA-1088 / PV-4).